An 88-amino-acid chain; its full sequence is EKC/KEOPS complex subunit SPAC4H3.13 (88 aa).

The protein belongs to the CTAG/PCC1 family. As to quaternary structure, component of the EKC/KEOPS complex composed of at least of SPAP27G11.07c/BUD32, cgi121, gon7, pgp2 and SPAC4H3.13/PCC1; the whole complex dimerizes.

It localises to the cytoplasm. It is found in the nucleus. Its subcellular location is the chromosome. The protein localises to the telomere. Functionally, component of the EKC/KEOPS complex that is required for the formation of a threonylcarbamoyl group on adenosine at position 37 (t(6)A37) in tRNAs that read codons beginning with adenine. The complex is probably involved in the transfer of the threonylcarbamoyl moiety of threonylcarbamoyl-AMP (TC-AMP) to the N6 group of A37. SPAC4H3.13/PCC1 functions as a dimerization module for the complex. The EKC/KEOPS complex also promotes both telomere uncapping and telomere elongation. The complex is required for efficient recruitment of transcriptional coactivators. The polypeptide is EKC/KEOPS complex subunit SPAC4H3.13 (Schizosaccharomyces pombe (strain 972 / ATCC 24843) (Fission yeast)).